A 166-amino-acid chain; its full sequence is Protein FAM89A (166 aa).

Belongs to the FAM89 family.

This chain is Protein FAM89A (fam89a), found in Xenopus laevis (African clawed frog).